A 235-amino-acid chain; its full sequence is Myelin protein zero-like protein 3 (235 aa).

Residues 1 to 31 (MQQRGAAGSRGCALFPLLGVLFFQGVYIVFS) form the signal peptide. Residues 32–148 (LEIRADAHVR…NIPMTELTVT (117 aa)) enclose the Ig-like V-type domain. At 32–158 (LEIRADAHVR…ERGFGTMLSS (127 aa)) the chain is on the extracellular side. The cysteines at positions 52 and 128 are disulfide-linked. An N-linked (GlcNAc...) asparagine glycan is attached at asparagine 123. A helical membrane pass occupies residues 159-179 (VALLSILVFVPSAVVVALLLV). Topologically, residues 180–235 (RMGRKAAGLKKRSRSGYKKSSIEVSDDTDQEEEEACMARLCVRCAECLDSDYEETY) are cytoplasmic.

This sequence belongs to the myelin P0 protein family.

The protein resides in the membrane. Its function is as follows. Mediates homophilic cell-cell adhesion. This Homo sapiens (Human) protein is Myelin protein zero-like protein 3 (MPZL3).